A 515-amino-acid chain; its full sequence is Maturase K (515 aa).

This sequence belongs to the intron maturase 2 family. MatK subfamily.

It is found in the plastid. Its subcellular location is the chloroplast. Functionally, usually encoded in the trnK tRNA gene intron. Probably assists in splicing its own and other chloroplast group II introns. This chain is Maturase K, found in Cedrus atlantica (Atlas cedar).